Here is a 2201-residue protein sequence, read N- to C-terminus: Activating signal cointegrator 1 complex subunit 3 (2201 aa).

At Ser-12 the chain carries Phosphoserine. Coiled coils occupy residues 18–81 and 328–356; these read KQDN…KQIV and IQSE…KAGE. A Helicase ATP-binding 1 domain is found at 486–669; sequence ETAYNTNENM…FLHVNPCIGL (184 aa). 499–506 contacts ATP; that stretch reads APTGAGKT. Lys-572 is modified (N6-acetyllysine). A DEVH box motif is present at residues 611–614; the sequence is DEVH. One can recognise a Helicase C-terminal 1 domain in the interval 696–914; sequence QLNNMDEVCY…GTVTNVEEAV (219 aa). In terms of domain architecture, SEC63 1 spans 978-1287; it reads STDLGRTASH…GAEAVCIINF (310 aa). One can recognise a Helicase ATP-binding 2 domain in the interval 1336 to 1511; it reads HTLYHTDCNV…WLNIRQMGLF (176 aa). 1349 to 1356 is an ATP binding site; that stretch reads APTGSGKT. The DEIH box motif lies at 1453-1456; sequence DEIH. Residues 1544-1739 enclose the Helicase C-terminal 2 domain; it reads PTFQAIRSHS…VLSDHLNAEI (196 aa). An SEC63 2 domain is found at 1812–2176; sequence PLTYGRIASY…LGLDQQYDIH (365 aa).

Belongs to the helicase family. As to quaternary structure, identified in the ASCC complex that contains ASCC1, ASCC2 and ASCC3. Functions as a scaffolding subunit that interacts directly with both ASCC1 and ASCC2. Interacts directly with ALKBH3, and thereby recruits ALKBH3 to the ASCC complex. Part of the ASC-1/TRIP4 complex, that contains TRIP4, ASCC1, ASCC2 and ASCC3. Part of the RQT (ribosome quality control trigger) complex, that contains ASCC2, ASCC3 and TRIP4. Associates with ribosomes; recruited to collided ribosomes. Interacts with ZCCHC4. Interacts with ZNF598. Interacts with RPS3.

The protein localises to the nucleus. Its subcellular location is the nucleus speckle. It is found in the cytoplasm. The protein resides in the cytosol. The enzyme catalyses Couples ATP hydrolysis with the unwinding of duplex DNA by translocating in the 3'-5' direction.. The catalysed reaction is ATP + H2O = ADP + phosphate + H(+). Functionally, ATPase involved both in DNA repair and rescue of stalled ribosomes. 3'-5' DNA helicase involved in repair of alkylated DNA: promotes DNA unwinding to generate single-stranded substrate needed for ALKBH3, enabling ALKBH3 to process alkylated N3-methylcytosine (3mC) within double-stranded regions. Also involved in activation of the ribosome quality control (RQC) pathway, a pathway that degrades nascent peptide chains during problematic translation. Drives the splitting of stalled ribosomes that are ubiquitinated in a ZNF598-dependent manner, as part of the ribosome quality control trigger (RQT) complex. Part of the ASC-1 complex that enhances NF-kappa-B, SRF and AP1 transactivation. The polypeptide is Activating signal cointegrator 1 complex subunit 3 (ascc3) (Bos taurus (Bovine)).